A 508-amino-acid chain; its full sequence is MGLPWYRVHTVVLNDPGRLLSVHIMHTALVAGWAGSMALYELAVFDPSDPVLDPMWRQGMFVIPFMTRLGITNSWGGWSITGGTITNPGLWSYEGVAGAHIVFSGLCFLAAIWHWVYWDLEIFCDERTGKPSLDLPKIFGIHLFLSGVACFGFGAFHVTGLYGPGIWVSDPYGLTGKVQPVNPAWGVEGFDPFVPGGIASHHIAAGTLGILAGLFHLSVRPPQRLYKGLRMGNIETVLSSSIAAVFFAAFVVAGTMWYGSATTPIELFGPTRYQWDQGYFQQEIYRRVSAGLAENQSLSEAWSKIPEKLAFYDYIGNNPAKGGLFRAGSMDNGDGIAVGWLGHPIFRDKEGRELFVRRMPTFFETFPVVLVDGDGIVRADVPFRRAESKYSVEQVGVTVEFYGGELNGVSYSDPATVKKYARRAQLGEIFELDRATLKSDGVFRSSPRGWFTFGHASFALLFFFGHIWHGARTLFRDVFAGIDPDLDAQVEFGAFQKLGDPTTRRQVV.

6 consecutive transmembrane segments (helical) span residues serine 21–serine 36, isoleucine 101–tryptophan 115, glycine 140–phenylalanine 156, isoleucine 203–serine 218, valine 237–valine 252, and serine 457–arginine 472.

It belongs to the PsbB/PsbC family. PsbB subfamily. In terms of assembly, PSII is composed of 1 copy each of membrane proteins PsbA, PsbB, PsbC, PsbD, PsbE, PsbF, PsbH, PsbI, PsbJ, PsbK, PsbL, PsbM, PsbT, PsbX, PsbY, PsbZ, Psb30/Ycf12, at least 3 peripheral proteins of the oxygen-evolving complex and a large number of cofactors. It forms dimeric complexes. Requires Binds multiple chlorophylls. PSII binds additional chlorophylls, carotenoids and specific lipids. as cofactor.

It is found in the plastid. Its subcellular location is the chloroplast thylakoid membrane. In terms of biological role, one of the components of the core complex of photosystem II (PSII). It binds chlorophyll and helps catalyze the primary light-induced photochemical processes of PSII. PSII is a light-driven water:plastoquinone oxidoreductase, using light energy to abstract electrons from H(2)O, generating O(2) and a proton gradient subsequently used for ATP formation. This is Photosystem II CP47 reaction center protein from Carica papaya (Papaya).